A 315-amino-acid polypeptide reads, in one-letter code: Protein OPG185 (315 aa).

The N-terminal stretch at 1 to 16 (MTRLPILLLLISLVYA) is a signal peptide. The 105-residue stretch at 17–121 (TPFPQTSKKI…NDTDKVDYEE (105 aa)) folds into the Ig-like V-type domain. The Virion surface portion of the chain corresponds to 17-279 (TPFPQTSKKI…SNYKTKDFVE (263 aa)). An intrachain disulfide couples cysteine 34 to cysteine 103. 4 N-linked (GlcNAc...) asparagine; by host glycosylation sites follow: asparagine 37, asparagine 69, asparagine 112, and asparagine 161. Residues 194–213 (TVSATSGESTTDETPEPITD) are disordered. An N-linked (GlcNAc...) asparagine; by host glycan is attached at asparagine 254. A helical membrane pass occupies residues 280-303 (IFGITALIILSAVAIFCITYYICN). Residues 304-315 (KRSRKYKTENKV) lie on the Intravirion side of the membrane.

The protein belongs to the orthopoxvirus OPG185 family. As to quaternary structure, heterodimerizes with OPG040. The heterodimer OPG185-OPG040 interacts with components of the entry fusion complex OPG143 and OPG094. Heterodimer with C3/VPC protein; disulfide-linked. Glycosylated; contains phosphate and sulfate-substituted glycans. O-glycosylation is required for hemagglutination and hemadsorption activities of infected cell membranes.

Its subcellular location is the virion membrane. It localises to the host membrane. Functionally, prevents cell to cell fusion by interacting with and directing the viral OPG040 protein on the host plasma membrane. The OPG185-OPG040 complex associates with components of the entry fusion complex (EFC) presumably to avoid superinfection and syncytium formation. Via its interaction with C3/VCP protein, protects the infected cell and probably also the extracellular enveloped virus from complement attack. This is Protein OPG185 (OPG185) from Vaccinia virus (strain Copenhagen) (VACV).